We begin with the raw amino-acid sequence, 357 residues long: Sorbitol dehydrogenase (357 aa).

At Ala-2 the chain carries N-acetylalanine. Residue Cys-45 participates in Zn(2+) binding. A substrate-binding site is contributed by Tyr-51. The Zn(2+) site is built by His-70, Glu-71, and Glu-156. Glu-156 is a substrate binding site. A Phosphoserine modification is found at Ser-169. Residues Ile-184, Asp-204, Arg-209, 273–275 (VGM), and 297–299 (VFR) each bind NAD(+). Positions 299 and 300 each coordinate substrate.

The protein belongs to the zinc-containing alcohol dehydrogenase family. As to quaternary structure, homotetramer; dimer of dimers. It depends on Zn(2+) as a cofactor. As to expression, expressed in liver and testis.

Its subcellular location is the mitochondrion membrane. It localises to the cell projection. It is found in the cilium. The protein resides in the flagellum. It carries out the reaction keto-D-fructose + NADH + H(+) = D-sorbitol + NAD(+). The catalysed reaction is xylitol + NAD(+) = D-xylulose + NADH + H(+). The enzyme catalyses L-iditol + NAD(+) = keto-L-sorbose + NADH + H(+). In terms of biological role, polyol dehydrogenase that catalyzes the reversible NAD(+)-dependent oxidation of various sugar alcohols. Is active with D-sorbitol (D-glucitol) leading to the C2-oxidized product D-fructose. Is a key enzyme in the polyol pathway that interconverts glucose and fructose via sorbitol, which constitutes an important alternate route for glucose metabolism. May play a role in sperm motility by using sorbitol as an alternative energy source for sperm motility. The sequence is that of Sorbitol dehydrogenase (Sord) from Rattus norvegicus (Rat).